A 154-amino-acid chain; its full sequence is Isotocin-neurophysin IT 1 (154 aa).

An N-terminal signal peptide occupies residues 1 to 20 (MSGSMFSVFSLLYLLSVCSA). A disulfide bridge links Cys-21 with Cys-26. Gly-29 carries the post-translational modification Glycine amide. Disulfide bonds link Cys-42/Cys-86, Cys-45/Cys-59, Cys-53/Cys-76, Cys-60/Cys-66, Cys-93/Cys-105, Cys-99/Cys-117, and Cys-106/Cys-111.

It belongs to the vasopressin/oxytocin family.

Its function is as follows. Isotocin causes contraction of smooth muscles. The chain is Isotocin-neurophysin IT 1 from Catostomus commersonii (White sucker).